The following is a 224-amino-acid chain: CRIB domain-containing protein RIC1 (224 aa).

The region spanning 29–42 is the CRIB domain; sequence IGFPTDVKHVAHIG. The interval 38-224 is disordered; the sequence is VAHIGSDGPT…SVDTTCNDII (187 aa). Polar residues-rich tracts occupy residues 69 to 84, 114 to 132, 144 to 155, and 215 to 224; these read SRGNSNKYNPQGTNQR, PNHNGSPPRKSSGNAASSD, AHGSTDSSNDQE, and SVDTTCNDII.

Interacts with ARAC11/ROP1. As to expression, expressed in columella cells from the root tip and epidermal cells at the base of lateral roots, leaves, stems, flowers, anthers, pollen and siliques.

Its subcellular location is the cytoplasm. It is found in the cytoskeleton. Functions as a downstream effector of Rho-related GTP binding proteins of the 'Rho of Plants' (ROPs) family. Participates in the propagation of ROP GTPase signals in specific cellular responses. Required for cortical microtubule organization. Promotes microtubule bundling and formation of well-ordered microtubule arrays in the neck region of pavement cells. This restricts cell lateral expansion to generate the narrow neck morphology of pavement cells. Its function is inhibited when it interacts with activated ARAC4/ROP2. Represses ARAC4/ROP2 activation and antagonizes the RIC4-actin pathway that promotes the assembly of cortical actin microfilaments. Acts as a downstream effector of ARAC3/ROP6 which functions in a signaling pathway that negatively regulates clathrin-mediated endocytosis and internalization of PIN1 and PIN2. Required for the asymmetric auxin distribution during root gravitropism and vascular patterning. Positively regulates auxin responses, but negatively regulates ABA responses during lateral root development and primary root elongation. The sequence is that of CRIB domain-containing protein RIC1 (RIC1) from Arabidopsis thaliana (Mouse-ear cress).